Consider the following 866-residue polypeptide: Protein SEY1 (866 aa).

At 1-746 (MVSNGHFAYA…KRSAIGGMTQ (746 aa)) the chain is on the cytoplasmic side. The GB1/RHD3-type G domain maps to 48–305 (GFNYHLISVF…IPADGFAVYA (258 aa)). 58 to 65 (GSQSTGKS) contributes to the GTP binding site. A coiled-coil region spans residues 480 to 506 (SNYTQELALYQKDLEKISAQLRKDEMR). A helical membrane pass occupies residues 747–767 (IPVYFYILLLALGWNEIIAVL). Residues 768–770 (RNP) are Lumenal-facing. Residues 771-791 (VYFFMLFLCSVAAYIIYQLNL) traverse the membrane as a helical segment. At 792–866 (WGPMVKMAEA…DDEVEGEETW (75 aa)) the chain is on the cytoplasmic side. The tract at residues 840-866 (SHVRSGRNATKINERDDDDEVEGEETW) is disordered. The span at 854-866 (RDDDDEVEGEETW) shows a compositional bias: acidic residues.

The protein belongs to the TRAFAC class dynamin-like GTPase superfamily. GB1/RHD3 GTPase family. RHD3 subfamily.

The protein localises to the endoplasmic reticulum membrane. Functionally, cooperates with the reticulon proteins and tubule-shaping DP1 family proteins to generate and maintain the structure of the tubular endoplasmic reticulum network. Has GTPase activity, which is required for its function in ER organization. This is Protein SEY1 from Coccidioides immitis (strain RS) (Valley fever fungus).